Reading from the N-terminus, the 179-residue chain is Dual-action ribosomal maturation protein DarP (179 aa).

It belongs to the DarP family.

Its subcellular location is the cytoplasm. Functionally, member of a network of 50S ribosomal subunit biogenesis factors which assembles along the 30S-50S interface, preventing incorrect 23S rRNA structures from forming. Promotes peptidyl transferase center (PTC) maturation. This Photorhabdus laumondii subsp. laumondii (strain DSM 15139 / CIP 105565 / TT01) (Photorhabdus luminescens subsp. laumondii) protein is Dual-action ribosomal maturation protein DarP.